We begin with the raw amino-acid sequence, 165 residues long: Lipoprotein signal peptidase (165 aa).

The next 2 helical transmembrane spans lie at 66-86 (WQFWLFLVATVLAVWAILSLT) and 91-111 (NEPVLYTAFGLIMGGALGNLV). Residues Asp-121 and Asp-139 contribute to the active site. A helical membrane pass occupies residues 132–152 (WPAFNVADIAICIGAFLAFVA).

Belongs to the peptidase A8 family.

The protein localises to the cell inner membrane. It carries out the reaction Release of signal peptides from bacterial membrane prolipoproteins. Hydrolyzes -Xaa-Yaa-Zaa-|-(S,diacylglyceryl)Cys-, in which Xaa is hydrophobic (preferably Leu), and Yaa (Ala or Ser) and Zaa (Gly or Ala) have small, neutral side chains.. Its pathway is protein modification; lipoprotein biosynthesis (signal peptide cleavage). This protein specifically catalyzes the removal of signal peptides from prolipoproteins. The sequence is that of Lipoprotein signal peptidase from Nitratidesulfovibrio vulgaris (strain DP4) (Desulfovibrio vulgaris).